A 232-amino-acid chain; its full sequence is TIR domain-containing adapter molecule 2 (232 aa).

The span at 1-10 (MGIGKSKMDP) shows a compositional bias: basic and acidic residues. Residues 1 to 71 (MGIGKSKMDP…VEERPEEDTE (71 aa)) are disordered. The N-myristoyl glycine moiety is linked to residue Gly-2. Polar residues predominate over residues 19 to 29 (KSQSVDTSQSH). A compositionally biased stretch (basic and acidic residues) spans 30–42 (HMSDSKQSEEISL). Residues 55–71 (PAEEQEGVEERPEEDTE) are compositionally biased toward acidic residues. Residues 70 to 226 (TEEEVFLKFV…AIWKETRNTV (157 aa)) enclose the TIR domain. Tyr-164 carries the phosphotyrosine modification.

In terms of assembly, homodimer. Interacts with TLR4, TICAM1, IRF3 and IRF7 in response to LPS. Interacts with IL1R1, IL1RAP, IRAK2, IRAK3 and TRAF6. Interacts with protein kinase-inactive mutants of IRAK1 and IRAK4. Isoform 1 interacts with isoform 2; the interaction occurs in late endosomes and disrupts the interaction between isoform 1 and TICAM1. Interacts with MYD88; the interaction decreases after IL-18 stimulation in a time-dependent manner. Interacts with IL18R1 and IL18RAP. Interacts with TLR2. Interacts with RAB11FIP2. Post-translationally, myristoylated. Required for membrane association which is critical for its ability to initiate efficient signaling. In terms of processing, phosphorylated by PRKCE in response to LPS. Phosphorylation is essential for its function. It is depleted from the membrane upon phosphorylation. Tyrosine phosphorylation is inhibited by phosphatase PTPN4.

The protein localises to the cytoplasm. It is found in the golgi apparatus. The protein resides in the cell membrane. Its subcellular location is the endoplasmic reticulum. It localises to the early endosome. The protein localises to the late endosome. It is found in the cell projection. The protein resides in the phagocytic cup. Functions as a sorting adapter in different signaling pathways to facilitate downstream signaling leading to type I interferon induction. In TLR4 signaling, physically bridges TLR4 and TICAM1 and functionally transmits signal to TICAM1 in early endosomes after endocytosis of TLR4. In TLR2 signaling, physically bridges TLR2 and MYD88 and is required for the TLR2-dependent movement of MYD88 to endosomes following ligand engagement. Involved in IL-18 signaling and is proposed to function as a sorting adapter for MYD88 in IL-18 signaling during adaptive immune response. Forms a complex with RAB11FIP2 that is recruited to the phagosomes to promote the activation of the actin-regulatory GTPases RAC1 and CDC42 and subsequent phagocytosis of Gram-negative bacteria. This Bos taurus (Bovine) protein is TIR domain-containing adapter molecule 2 (TICAM2).